The following is a 322-amino-acid chain: Beta-ketoacyl-[acyl-carrier-protein] synthase III (322 aa).

Catalysis depends on residues Cys113 and His247. The tract at residues 248-252 is ACP-binding; that stretch reads QANIR. Asn278 is an active-site residue.

This sequence belongs to the thiolase-like superfamily. FabH family. In terms of assembly, homodimer.

It localises to the cytoplasm. It carries out the reaction malonyl-[ACP] + acetyl-CoA + H(+) = 3-oxobutanoyl-[ACP] + CO2 + CoA. The protein operates within lipid metabolism; fatty acid biosynthesis. Its function is as follows. Catalyzes the condensation reaction of fatty acid synthesis by the addition to an acyl acceptor of two carbons from malonyl-ACP. Catalyzes the first condensation reaction which initiates fatty acid synthesis and may therefore play a role in governing the total rate of fatty acid production. Possesses both acetoacetyl-ACP synthase and acetyl transacylase activities. Its substrate specificity determines the biosynthesis of branched-chain and/or straight-chain of fatty acids. This is Beta-ketoacyl-[acyl-carrier-protein] synthase III from Tropheryma whipplei (strain TW08/27) (Whipple's bacillus).